The following is a 236-amino-acid chain: Ribitol-5-phosphate cytidylyltransferase (236 aa).

CTP-binding positions include 7-10 (LAGG) and 80-86 (GTDRNET).

Belongs to the IspD/TarI cytidylyltransferase family. TarI subfamily.

The enzyme catalyses D-ribitol 5-phosphate + CTP + H(+) = CDP-L-ribitol + diphosphate. It participates in cell wall biogenesis; poly(ribitol phosphate) teichoic acid biosynthesis. Catalyzes the transfer of the cytidylyl group of CTP to D-ribitol 5-phosphate. This Listeria monocytogenes serovar 1/2a (strain ATCC BAA-679 / EGD-e) protein is Ribitol-5-phosphate cytidylyltransferase.